The following is a 208-amino-acid chain: Porimin (208 aa).

An N-terminal signal peptide occupies residues 1 to 26 (MGLGARGAWAALLLGTLQVLALLGAA). Residues 27 to 166 (HESAAMAASA…EAKKGSKFDT (140 aa)) lie on the Extracellular side of the membrane. Residues 42-57 (GLPHNSSANSTETLQH) show a composition bias toward polar residues. The disordered stretch occupies residues 42 to 125 (GLPHNSSANS…PKTTSVSQNT (84 aa)). 7 N-linked (GlcNAc...) asparagine glycosylation sites follow: Asn-46, Asn-50, Asn-64, Asn-68, Asn-83, Asn-96, and Asn-106. The segment covering 65–107 (ETSNSTVKPPTSVASDSSNTTVTTMKPTAASNTTTPGMVSTNM) has biased composition (polar residues). Residues 108–122 (TSTTLKSTPKTTSVS) are compositionally biased toward low complexity. N-linked (GlcNAc...) asparagine glycosylation is found at Asn-124 and Asn-138. A helical transmembrane segment spans residues 167 to 187 (GSFVGGIVLTLGVLSILYIGC). Over 188–208 (KMYYSRRGIRYRTIDEHDAII) the chain is Cytoplasmic.

Belongs to the CD164 family. In terms of tissue distribution, ubiquitous. Not expressed in ovary. Expressed in keratinocytes.

Its subcellular location is the membrane. Its function is as follows. Implicated in oncotic cell death, characterized by cell swelling, organelle swelling, vacuolization and increased membrane permeability. This is Porimin (TMEM123) from Homo sapiens (Human).